The primary structure comprises 323 residues: Acetyl-coenzyme A carboxylase carboxyl transferase subunit alpha (323 aa).

Positions 39-293 (RLSKKSQQLT…RRALADSLRQ (255 aa)) constitute a CoA carboxyltransferase C-terminal domain.

Belongs to the AccA family. As to quaternary structure, acetyl-CoA carboxylase is a heterohexamer composed of biotin carboxyl carrier protein (AccB), biotin carboxylase (AccC) and two subunits each of ACCase subunit alpha (AccA) and ACCase subunit beta (AccD).

The protein localises to the cytoplasm. The catalysed reaction is N(6)-carboxybiotinyl-L-lysyl-[protein] + acetyl-CoA = N(6)-biotinyl-L-lysyl-[protein] + malonyl-CoA. The protein operates within lipid metabolism; malonyl-CoA biosynthesis; malonyl-CoA from acetyl-CoA: step 1/1. In terms of biological role, component of the acetyl coenzyme A carboxylase (ACC) complex. First, biotin carboxylase catalyzes the carboxylation of biotin on its carrier protein (BCCP) and then the CO(2) group is transferred by the carboxyltransferase to acetyl-CoA to form malonyl-CoA. This Paraburkholderia phymatum (strain DSM 17167 / CIP 108236 / LMG 21445 / STM815) (Burkholderia phymatum) protein is Acetyl-coenzyme A carboxylase carboxyl transferase subunit alpha.